A 287-amino-acid polypeptide reads, in one-letter code: GPN-loop GTPase 3 (287 aa).

Residue 12–17 (GAGKST) participates in GTP binding. The Gly-Pro-Asn (GPN)-loop; involved in dimer interface motif lies at 69–71 (GPN). A GTP-binding site is contributed by 172 to 175 (SKMD).

This sequence belongs to the GPN-loop GTPase family. Heterodimers with GPN1 or GPN2. Binds to RNA polymerase II (RNAPII).

Functionally, small GTPase required for proper nuclear import of RNA polymerase II and III (RNAPII and RNAPIII). May act at an RNAP assembly step prior to nuclear import. This chain is GPN-loop GTPase 3, found in Cryptococcus neoformans var. neoformans serotype D (strain B-3501A) (Filobasidiella neoformans).